Reading from the N-terminus, the 815-residue chain is Patatin-like phospholipase domain-containing protein LELG_00944 (815 aa).

Over residues 41–50 (VSTTAPTTPL) the composition is skewed to polar residues. Disordered regions lie at residues 41 to 105 (VSTT…PQLK) and 140 to 166 (SENL…STSP). The span at 54–73 (LDMGDLSLLGGELGNGSDDV) shows a compositional bias: low complexity. Over residues 74 to 94 (VVGDDDDDDDDDDDDDDDDDD) the composition is skewed to acidic residues. Basic residues predominate over residues 148-160 (KRTKFAKSSKSSK). Residues 185–205 (WPILTFVVIWVTILGFLYLAV) traverse the membrane as a helical segment. Residues 360-552 (LCLSGGACFA…RTDIPIDALN (193 aa)) form the PNPLA domain. Residues 391–395 (GTSGG) carry the GXSXG motif. S393 serves as the catalytic Nucleophile. D539 acts as the Proton acceptor in catalysis. Positions 753–815 (GSTLRDDDAD…LTKERRHTVY (63 aa)) are disordered. A compositionally biased stretch (acidic residues) spans 759–799 (DDADADVDEDDNEDEDEEDEDENDYEEYDVEDLDDPYESDA).

Belongs to the PLPL family.

The protein resides in the membrane. Probable lipid hydrolase. This is Patatin-like phospholipase domain-containing protein LELG_00944 from Lodderomyces elongisporus (strain ATCC 11503 / CBS 2605 / JCM 1781 / NBRC 1676 / NRRL YB-4239) (Yeast).